Here is a 759-residue protein sequence, read N- to C-terminus: Holliday junction resolvase YEN1 (759 aa).

3 disordered regions span residues 62–83 (RSRS…SQEY), 498–518 (SQSP…TRRQ), and 683–702 (KSRT…KSRS). Residues 500–512 (SPLKRSNSPSRSK) show a composition bias toward low complexity. Phosphoserine is present on residues serine 730 and serine 731.

This sequence belongs to the XPG/RAD2 endonuclease family. GEN subfamily.

The protein resides in the cytoplasm. It is found in the nucleus. Functionally, endonuclease which resolves Holliday junctions by the introduction of symmetrically related cuts across the junction point, to produce nicked duplex products in which the nicks can be readily ligated. Four-way DNA intermediates, also known as Holliday junctions, are formed during homologous recombination and DNA repair, and their resolution is necessary for proper chromosome segregation. Involved in DNA-damage repair in vegetative cells. The polypeptide is Holliday junction resolvase YEN1 (YEN1) (Saccharomyces cerevisiae (strain ATCC 204508 / S288c) (Baker's yeast)).